A 31-amino-acid polypeptide reads, in one-letter code: Potassium channel toxin alpha-KTx 5.5 (31 aa).

Intrachain disulfides connect Cys-3–Cys-21, Cys-8–Cys-26, and Cys-12–Cys-28. The interval 6–9 (RRCE) is [R/K]XCQ motif. Position 31 is a histidine amide (His-31).

As to expression, expressed by the venom gland.

The protein resides in the secreted. Blocks small conductance calcium-activated potassium channels. The sequence is that of Potassium channel toxin alpha-KTx 5.5 from Hottentotta tamulus (Eastern Indian scorpion).